We begin with the raw amino-acid sequence, 292 residues long: Medium chain reductase/dehydrogenase ucsI (292 aa).

C43 is a Zn(2+) binding site. Y49 provides a ligand contact to substrate. Zn(2+)-binding residues include H65 and E66. NAD(+)-binding positions include 184 to 189 (GCGPVG), D208, R213, and 276 to 278 (IGA).

This sequence belongs to the zinc-containing alcohol dehydrogenase family. It depends on Zn(2+) as a cofactor.

Its pathway is mycotoxin biosynthesis. In terms of biological role, medium chain reductase/dehydrogenase; part of the gene cluster that mediates the biosynthesis of UCS1025A, a member of the pyrrolizidinone family that acts as a strong telomerase inhibitor and displays potent antibacterial and antitumor properties. These compounds share a hemiaminal-containing pyrrolizidinone core fused with a gamma-lactone, giving a furopyrrolizidine that is connected to a decalin fragment. The polyketide synthase module (PKS) of the PKS-NRPS ucsA is responsible for the synthesis of the polyketide backbone via the condensation of an acetyl-CoA starter unit with 6 malonyl-CoA units. The downstream nonribosomal peptide synthetase (NRPS) module then amidates the carboxyl end of the polyketide with a 2S,3S-methylproline derived from L-isoleucine by the 2-oxoglutarate-dependent dioxygenase ucsF which converts L-isoleucine to (4S,5S)-4-methylpyrroline-5-carboxylate that is further converted to 2S,3S-methylproline by the pyrroline-5-carboxylate reductase ucsG. Reductive release of the completed aminoacyl polyketide from the assembly line can form the 3-pyrrolin-2-one structure via an intramolecular Knoevenagel reaction. Because ucsA lacks a designated enoylreductase (ER) domain, the required activity is provided the enoyl reductase ucsL. This keto acyclic precursor is the substrate of the Diels-Alderase ucsH, that catalyzes the Diels-Alder cycloaddition. Oxidation of the 3S-methyl group to a carboxylate by the cytochrome P450 monooxygenase ucsK allows an oxa-Michael cyclization that might involve the reductase/dehydrogenase ucsI and which furnishes the furopyrrolizidine. The oxidase ucsJ likely plays a critical role in stereoselective reduction of the C5-C6 double bond to afford the required R-configured carboxylate group. Further enolization and oxidation at C5 by an unidentified enzyme affords the last intermediate that can undergo oxa-Michael cyclization to yield UCS1025A. This Acremonium sp protein is Medium chain reductase/dehydrogenase ucsI.